We begin with the raw amino-acid sequence, 518 residues long: Glutamate--cysteine ligase (518 aa).

It belongs to the glutamate--cysteine ligase type 1 family. Type 1 subfamily.

The enzyme catalyses L-cysteine + L-glutamate + ATP = gamma-L-glutamyl-L-cysteine + ADP + phosphate + H(+). It functions in the pathway sulfur metabolism; glutathione biosynthesis; glutathione from L-cysteine and L-glutamate: step 1/2. This Buchnera aphidicola subsp. Acyrthosiphon pisum (strain 5A) protein is Glutamate--cysteine ligase.